Here is a 327-residue protein sequence, read N- to C-terminus: Cysteine synthase (327 aa).

Position 65 is an N6-(pyridoxal phosphate)lysine (K65). Pyridoxal 5'-phosphate-binding positions include N95, 200–204 (GTGGT), and S282.

Belongs to the cysteine synthase/cystathionine beta-synthase family. Pyridoxal 5'-phosphate serves as cofactor.

The enzyme catalyses O-acetyl-L-serine + hydrogen sulfide = L-cysteine + acetate. It functions in the pathway amino-acid biosynthesis; L-cysteine biosynthesis; L-cysteine from L-serine: step 2/2. The chain is Cysteine synthase (cysM) from Aquifex aeolicus (strain VF5).